Consider the following 175-residue polypeptide: uncharacterized protein (175 aa).

Positions 35–56 are enriched in low complexity; sequence LIENSNYDNNNINNNNNNNNTD. The disordered stretch occupies residues 35-70; the sequence is LIENSNYDNNNINNNNNNNNTDNDNDNNNDNEPFYN. 2 helical membrane passes run 106 to 126 and 132 to 152; these read ILSF…FFNY and YFII…KSIF.

The protein localises to the membrane. This is an uncharacterized protein from Dictyostelium discoideum (Social amoeba).